The primary structure comprises 891 residues: DNA mismatch repair protein MutS (891 aa).

646–653 (GPNMAGKS) serves as a coordination point for ATP.

Belongs to the DNA mismatch repair MutS family.

This protein is involved in the repair of mismatches in DNA. It is possible that it carries out the mismatch recognition step. This protein has a weak ATPase activity. The chain is DNA mismatch repair protein MutS from Rickettsia massiliae (strain Mtu5).